We begin with the raw amino-acid sequence, 164 residues long: MMSLLTGTGLRWMWLAVFAIVLDQAAKLAIMQHIPYGHGVVITPFFNLVHVYNTGAAFSFLADAEGWQRWLFSGLAIVISGVLAVAMAKAPAKCSLSNLAYSLVIGGAIGNLIDRVVYGHVVDFLDFHWQDLYHFAAFNVADMAISCGAVFIILDGFIKKPADK.

Helical transmembrane passes span 2–22, 40–60, 70–90, and 99–119; these read MSLLTGTGLRWMWLAVFAIVL, VVITPFFNLVHVYNTGAAFSF, WLFSGLAIVISGVLAVAMAKA, and LAYSLVIGGAIGNLIDRVVYG. Residues Asp123 and Asp142 contribute to the active site. Residues 138–158 traverse the membrane as a helical segment; it reads FNVADMAISCGAVFIILDGFI.

It belongs to the peptidase A8 family.

Its subcellular location is the cell inner membrane. The catalysed reaction is Release of signal peptides from bacterial membrane prolipoproteins. Hydrolyzes -Xaa-Yaa-Zaa-|-(S,diacylglyceryl)Cys-, in which Xaa is hydrophobic (preferably Leu), and Yaa (Ala or Ser) and Zaa (Gly or Ala) have small, neutral side chains.. It functions in the pathway protein modification; lipoprotein biosynthesis (signal peptide cleavage). Its function is as follows. This protein specifically catalyzes the removal of signal peptides from prolipoproteins. The sequence is that of Lipoprotein signal peptidase from Tolumonas auensis (strain DSM 9187 / NBRC 110442 / TA 4).